Consider the following 193-residue polypeptide: Nucleoside triphosphate pyrophosphatase (193 aa).

The Proton acceptor role is filled by aspartate 69.

Belongs to the Maf family. The cofactor is a divalent metal cation.

Its subcellular location is the cytoplasm. The catalysed reaction is a ribonucleoside 5'-triphosphate + H2O = a ribonucleoside 5'-phosphate + diphosphate + H(+). It catalyses the reaction a 2'-deoxyribonucleoside 5'-triphosphate + H2O = a 2'-deoxyribonucleoside 5'-phosphate + diphosphate + H(+). Functionally, nucleoside triphosphate pyrophosphatase. May have a dual role in cell division arrest and in preventing the incorporation of modified nucleotides into cellular nucleic acids. The chain is Nucleoside triphosphate pyrophosphatase from Parasynechococcus marenigrum (strain WH8102).